The chain runs to 224 residues: Ribonuclease 3 (224 aa).

Residues 4-126 (LDRLQRQISY…IIGAISLDSS (123 aa)) form the RNase III domain. Glutamate 39 is a Mg(2+) binding site. The active site involves aspartate 43. Mg(2+) contacts are provided by aspartate 112 and glutamate 115. Glutamate 115 is a catalytic residue. A DRBM domain is found at 153-223 (DPKTRLQEYL…AEQILTALEI (71 aa)).

This sequence belongs to the ribonuclease III family. As to quaternary structure, homodimer. Mg(2+) serves as cofactor.

It is found in the cytoplasm. It carries out the reaction Endonucleolytic cleavage to 5'-phosphomonoester.. In terms of biological role, digests double-stranded RNA. Involved in the processing of primary rRNA transcript to yield the immediate precursors to the large and small rRNAs (23S and 16S). Processes some mRNAs, and tRNAs when they are encoded in the rRNA operon. Processes pre-crRNA and tracrRNA of type II CRISPR loci if present in the organism. This chain is Ribonuclease 3, found in Mannheimia succiniciproducens (strain KCTC 0769BP / MBEL55E).